The sequence spans 298 residues: uncharacterized protein (298 aa).

Positions 264 to 298 (APPPPLPCITTGPAALEDSPKASKANKGKKAKAKK) are disordered. Positions 287–298 (KANKGKKAKAKK) are enriched in basic residues.

This is an uncharacterized protein from Mus musculus (Mouse).